A 564-amino-acid chain; its full sequence is Ferric reductase transmembrane component 1 (564 aa).

The N-linked (GlcNAc...) asparagine glycan is linked to asparagine 4. A run of 2 helical transmembrane segments spans residues threonine 10–leucine 30 and valine 73–methionine 93. The N-linked (GlcNAc...) asparagine glycan is linked to asparagine 111. Residues valine 117 to isoleucine 137 form a helical membrane-spanning segment. The Ferric oxidoreductase domain occupies leucine 121 to tyrosine 254. 2 residues coordinate heme: histidine 157 and histidine 171. 2 consecutive transmembrane segments (helical) span residues leucine 160–alanine 180 and isoleucine 193–phenylalanine 213. Residues histidine 225 and histidine 239 each coordinate heme. One can recognise an FAD-binding FR-type domain in the interval valine 255–proline 410. A glycan (N-linked (GlcNAc...) asparagine) is linked at asparagine 268. Histidine 317–serine 323 is an FAD binding site. A glycan (N-linked (GlcNAc...) asparagine) is linked at asparagine 360. Phosphoserine is present on residues serine 362, serine 381, and serine 383. A helical transmembrane segment spans residues leucine 417–isoleucine 437. Leucine 419–serine 427 lines the NAD(+) pocket. N-linked (GlcNAc...) asparagine glycosylation is present at asparagine 501.

The protein belongs to the ferric reductase (FRE) family. FAD serves as cofactor. Heme is required as a cofactor.

The protein resides in the cell membrane. The catalysed reaction is 2 a Fe(II)-siderophore + NADP(+) + H(+) = 2 a Fe(III)-siderophore + NADPH. Functionally, metalloreductase responsible for reducing extracellular iron and copper prior to import. Catalyzes the reductive uptake of Fe(3+)-salts and Fe(3+) bound to catecholate or hydroxamate siderophores. Fe(3+) is reduced to Fe(2+), which then dissociates from the siderophore and can be imported by the high-affinity Fe(2+) transport complex in the plasma membrane. Also participates in Cu(2+) reduction and Cu(+) uptake. This is Ferric reductase transmembrane component 1 (frp1) from Schizosaccharomyces pombe (strain 972 / ATCC 24843) (Fission yeast).